The sequence spans 346 residues: Annexin A1 (346 aa).

Residue A2 is modified to N-acetylalanine. S5 is modified (phosphoserine; by TRPM7). An Isoglutamyl lysine isopeptide (Gln-Lys) (interchain with K-?) cross-link involves residue Q19. Position 21 is a phosphotyrosine; by EGFR (Y21). Residues 25–47 (VKGSKGGPGSAVSPYPTFNPSSD) are disordered. 2 positions are modified to phosphoserine: S34 and S37. Phosphothreonine is present on T41. Annexin repeat units follow at residues 42–113 (FNPS…ALLK), 114–185 (TPAQ…SLAK), 197–269 (DLAD…VVVK), and 273–344 (SKPM…ALCG). Residue K58 is modified to N6-acetyllysine. Ca(2+) contacts are provided by G59, V60, E62, K97, L100, E105, M127, G129, G131, T132, and E134. A Phosphothreonine modification is found at T136. Positions 171, 210, and 213 each coordinate Ca(2+). K214 participates in a covalent cross-link: Glycyl lysine isopeptide (Lys-Gly) (interchain with G-Cter in SUMO1); alternate. K214 is covalently cross-linked (Glycyl lysine isopeptide (Lys-Gly) (interchain with G-Cter in SUMO2); alternate). G215 lines the Ca(2+) pocket. Position 239 is an N6-acetyllysine (K239). Ca(2+) is bound by residues D253, E255, and L256. A Glycyl lysine isopeptide (Lys-Gly) (interchain with G-Cter in SUMO1) cross-link involves residue K257. Ca(2+) is bound by residues E261, M286, G288, and G290. Position 312 is an N6-acetyllysine (K312). Cysteines 324 and 343 form a disulfide. 3 residues coordinate Ca(2+): L328, E330, and T331. K332 participates in a covalent cross-link: Glycyl lysine isopeptide (Lys-Gly) (interchain with G-Cter in SUMO1). E336 provides a ligand contact to Ca(2+).

The protein belongs to the annexin family. As to quaternary structure, homodimer; non-covalently linked. Homodimer; linked by transglutamylation. Homodimers linked by transglutamylation are observed in placenta, but not in other tissues. Interacts with S100A11. Heterotetramer, formed by two molecules each of S100A11 and ANXA1. Interacts with DYSF. Interacts with EGFR. Post-translationally, phosphorylated by EGFR. Phosphorylated by protein kinase C and TRPM7. Phosphorylated in response to EGF treatment. In terms of processing, sumoylated. Proteolytically cleaved by cathepsin CTSG to release the active N-terminal peptide Ac2-26. Detected in lung and spleen (at protein level).

The protein resides in the nucleus. The protein localises to the cytoplasm. It is found in the cell projection. It localises to the cilium. Its subcellular location is the basolateral cell membrane. The protein resides in the lateral cell membrane. The protein localises to the early endosome. It is found in the cell membrane. It localises to the cytoplasmic vesicle membrane. Its subcellular location is the apical cell membrane. The protein resides in the membrane. The protein localises to the endosome. It is found in the secreted. It localises to the extracellular space. Its subcellular location is the extracellular exosome. The protein resides in the cytoplasmic vesicle. The protein localises to the secretory vesicle lumen. It is found in the phagocytic cup. In terms of biological role, plays important roles in the innate immune response as effector of glucocorticoid-mediated responses and regulator of the inflammatory process. Has anti-inflammatory activity. Plays a role in glucocorticoid-mediated down-regulation of the early phase of the inflammatory response. Contributes to the adaptive immune response by enhancing signaling cascades that are triggered by T-cell activation, regulates differentiation and proliferation of activated T-cells. Promotes the differentiation of T-cells into Th1 cells and negatively regulates differentiation into Th2 cells. Has no effect on unstimulated T-cells. Negatively regulates hormone exocytosis via activation of the formyl peptide receptors and reorganization of the actin cytoskeleton. Has high affinity for Ca(2+) and can bind up to eight Ca(2+) ions. Displays Ca(2+)-dependent binding to phospholipid membranes. Plays a role in the formation of phagocytic cups and phagosomes. Plays a role in phagocytosis by mediating the Ca(2+)-dependent interaction between phagosomes and the actin cytoskeleton. Its function is as follows. Functions at least in part by activating the formyl peptide receptors and downstream signaling cascades. Promotes chemotaxis of granulocytes and monocytes via activation of the formyl peptide receptors. Promotes rearrangement of the actin cytoskeleton, cell polarization and cell migration. Promotes resolution of inflammation and wound healing. Acts via neutrophil N-formyl peptide receptors to enhance the release of CXCL2. The polypeptide is Annexin A1 (ANXA1) (Sus scrofa (Pig)).